Reading from the N-terminus, the 109-residue chain is UPF0060 membrane protein YfjF (109 aa).

The next 4 helical transmembrane spans lie at 6 to 26, 32 to 52, 61 to 81, and 87 to 107; these read ILLF…VWLW, PAGY…LPTF, VYAA…WLVD, and LYDW…LFAP.

It belongs to the UPF0060 family.

The protein resides in the cell membrane. This Bacillus subtilis (strain 168) protein is UPF0060 membrane protein YfjF (yfjF).